Consider the following 30-residue polypeptide: Bowman-Birk type proteinase inhibitor 4 (30 aa).

2 disulfides stabilise this stretch: Cys9/Cys24 and Cys14/Cys22.

Functionally, inhibits trypsin (IC(50)=17.60 nM) and, to a lesser extent, alpha-chymotrypsin (IC(50)=2.38 uM). The polypeptide is Bowman-Birk type proteinase inhibitor 4 (Lathyrus sativus (White vetchling)).